We begin with the raw amino-acid sequence, 684 residues long: MYDEPSDIVRLVSTVIVSESEHIPVLAIIDFFFSLLSSASTKREAQSYLSRFKAEKPEPAKSPPEQSAMGYPSTNFVQSGVNLGGGMFGMAGVIDNHAMFRQESALGKSLPIETVSEETLHIALVKIREPQLLNDQTLGEVGRTLSQLSLLGMSCCVVIDPGLPQSDTFWRNRSIKQADRMLAAIEKNGVDSRRLDDVIRLAPSPKHALSVVSRELILSPLRRGKIAVIPPIGYTEGTLRAVPVLADDVVLALTREFTGLGVKARPEDNPHELARRISKLQKEVSVDRLIILDPAGGIPSLKRASKSHVFVNLEQEFEEITNELREGMAAGDSLVTGDKNENGQQILSLEKSNPLSTVVEREGAASLPSELQVTSSDRSSVHIPDFERHLDNLTLLHNALTYLPPASSGIISIPQDATNSASEPRDPSQLSTVATRRKRNPLIHNLLTDKPSHSASLPAGRLRANNGCSSQNNFQVMHSTFVKKGMPLTLFPDPRVHIWKPPINGKSRMTLNDPHIDLPRLVQLIEDSFNRKLDVQHYLNRVSDRLAGLIIAGEYEGGAVLTWELPPGVPNDGSEESRSRMVPYLDKFTVLKRSQGAGGVADIVFNAMVRTCLPKGVCWRSRRDNPVNKWYFERARGTWKLPGSNWTMFWTTDGVLEGDRLFRDYEGVCRGIEPSWLDNKHVVD.

The tract at residues 414-439 is disordered; sequence PQDATNSASEPRDPSQLSTVATRRKR. Polar residues predominate over residues 415 to 434; it reads QDATNSASEPRDPSQLSTVA. The N-acetyltransferase domain occupies 505–674; it reads GKSRMTLNDP…YEGVCRGIEP (170 aa).

It belongs to the acetyltransferase family.

It localises to the mitochondrion. It catalyses the reaction L-glutamate + acetyl-CoA = N-acetyl-L-glutamate + CoA + H(+). It participates in amino-acid biosynthesis; L-arginine biosynthesis; N(2)-acetyl-L-ornithine from L-glutamate: step 1/4. Functionally, N-acetylglutamate synthase involved in arginine biosynthesis. In Ajellomyces capsulatus (strain NAm1 / WU24) (Darling's disease fungus), this protein is Amino-acid acetyltransferase, mitochondrial (ARG2).